A 2115-amino-acid chain; its full sequence is Non-reducing polyketide synthase PFUR17_0229 (2115 aa).

The segment at 8-246 is N-terminal acylcarrier protein transacylase (SAT) domain (SAT); sequence VLFGDQTVDP…ISLPITAAFH (239 aa). The Ketosynthase family 3 (KS3) domain maps to 367–796; the sequence is SGDIAIVGVA…GGNTSLVLED (430 aa). Residues Cys-539, His-674, and His-713 each act as for beta-ketoacyl synthase activity in the active site. Positions 895 to 1218 are malonyl-CoA:ACP transacylase (MAT) domain; sequence IFAFTGQGAQ…SISNAYNSGA (324 aa). Residues 1279–1592 are product template (PT) domain; that stretch reads TTCLQKVESE…KRNILQSLLS (314 aa). The segment at 1282–1413 is N-terminal hotdog fold; that stretch reads LQKVESETFT…CTVMYGDGQQ (132 aa). The PKS/mFAS DH domain maps to 1282–1588; that stretch reads LQKVESETFT…FQKMKRNILQ (307 aa). The active-site Proton acceptor; for dehydratase activity is the His-1315. A C-terminal hotdog fold region spans residues 1441–1588; sequence VHRLLKEMIY…FQKMKRNILQ (148 aa). Asp-1501 functions as the Proton donor; for dehydratase activity in the catalytic mechanism. The tract at residues 1594–1613 is disordered; that stretch reads GHEETPPARPVPSKRTVQGS. The 78-residue stretch at 1626–1703 folds into the Carrier 1 domain; the sequence is KAASGGFSNI…QLRNFFLDKV (78 aa). Ser-1663 carries the O-(pantetheine 4'-phosphoryl)serine modification. The interval 1710–1742 is disordered; the sequence is FDDEESEMSSSTAGSTPGSSTSHGNQNTTVTTP. Residues 1718–1733 show a composition bias toward low complexity; sequence SSSTAGSTPGSSTSHG. One can recognise a Carrier 2 domain in the interval 1742-1819; it reads PAEPDVVAIL…DVQKALGVPS (78 aa). Ser-1779 is subject to O-(pantetheine 4'-phosphoryl)serine. The interval 1861–2097 is thioesterase (TE) domain; it reads LFLLPDGAGS…VVGGNHFSIM (237 aa).

It depends on pantetheine 4'-phosphate as a cofactor.

The catalysed reaction is 6 malonyl-CoA + 2 acetyl-CoA + 5 H(+) = o-orsellinate depside + 6 CO2 + 8 CoA + H2O. Functionally, non-reducing polyketide synthase; part of a gene cluster that mediates the biosynthesis of a yet unidentified depside/depsidone compound. The first step in the pathway is performed by the PKS PFUR17_0229 that condenses 2 acetyl-CoA starter units with 6 malonyl-CoA units to produce lecanoric acid (LA), also known as orsellinate depside. The biosynthesis occurs via the formation of 2 orsellinate intermediates fused together by the C-terminal thioesterase (TE) domain that finally releases lecanoric acid. In addition to the PKS gene, the PFUR17 gene cluster contains closely linked genes encoding a cytochrome P-450 and a laccase (phenol oxidase), directly upstream and downstream respectively, so it is likely that lecanoric acid is an intermediate in a longer biosynthetic pathway. This Pseudevernia furfuracea (Tree moss) protein is Non-reducing polyketide synthase PFUR17_0229.